Consider the following 813-residue polypeptide: Valine--tRNA ligase (813 aa).

The 'HIGH' region signature appears at 46 to 56 (PTVSGQLHIGH). A 'KMSKS' region motif is present at residues 536–540 (KMSKS). Lys-539 is a binding site for ATP.

Belongs to the class-I aminoacyl-tRNA synthetase family. ValS type 2 subfamily. As to quaternary structure, monomer.

Its subcellular location is the cytoplasm. The enzyme catalyses tRNA(Val) + L-valine + ATP = L-valyl-tRNA(Val) + AMP + diphosphate. Catalyzes the attachment of valine to tRNA(Val). As ValRS can inadvertently accommodate and process structurally similar amino acids such as threonine, to avoid such errors, it has a 'posttransfer' editing activity that hydrolyzes mischarged Thr-tRNA(Val) in a tRNA-dependent manner. The sequence is that of Valine--tRNA ligase from Rickettsia canadensis (strain McKiel).